Consider the following 128-residue polypeptide: Fluoride-specific ion channel FluC (128 aa).

Transmembrane regions (helical) follow at residues 6-26 (LVAL…GLVL), 36-56 (LPTF…AGLA), 68-88 (VLLF…GLET), and 99-119 (IAAA…WLGF). Residues Gly76 and Thr79 each contribute to the Na(+) site.

The protein belongs to the fluoride channel Fluc/FEX (TC 1.A.43) family.

Its subcellular location is the cell inner membrane. The enzyme catalyses fluoride(in) = fluoride(out). With respect to regulation, na(+) is not transported, but it plays an essential structural role and its presence is essential for fluoride channel function. Its function is as follows. Fluoride-specific ion channel. Important for reducing fluoride concentration in the cell, thus reducing its toxicity. In Methylobacillus flagellatus (strain ATCC 51484 / DSM 6875 / VKM B-1610 / KT), this protein is Fluoride-specific ion channel FluC.